Reading from the N-terminus, the 158-residue chain is MAVAELEKKGFELTTVEKLVGWARSGSMWPMTFGLACCAVEMMHVGAARYDLDRFGIIFRPSPRQSDVMIVAGTLCNKMAPALRKVYDQMPEPRWVISMGSCANGGGYYHYSYSVVRGCDRIVPVDVYVPGCPPTAEALLYGIIQLQNKIRRKPVLEA.

Positions 37, 38, 102, and 132 each coordinate [4Fe-4S] cluster.

Belongs to the complex I 20 kDa subunit family. As to quaternary structure, NDH-1 is composed of 14 different subunits. Subunits NuoB, C, D, E, F, and G constitute the peripheral sector of the complex. [4Fe-4S] cluster serves as cofactor.

It is found in the cell inner membrane. The enzyme catalyses a quinone + NADH + 5 H(+)(in) = a quinol + NAD(+) + 4 H(+)(out). In terms of biological role, NDH-1 shuttles electrons from NADH, via FMN and iron-sulfur (Fe-S) centers, to quinones in the respiratory chain. Couples the redox reaction to proton translocation (for every two electrons transferred, four hydrogen ions are translocated across the cytoplasmic membrane), and thus conserves the redox energy in a proton gradient. The sequence is that of NADH-quinone oxidoreductase subunit B from Legionella pneumophila (strain Paris).